The sequence spans 152 residues: Ribosomal RNA large subunit methyltransferase H (152 aa).

S-adenosyl-L-methionine contacts are provided by residues Leu68, Gly100, and 119–124; that span reads FGPMTW.

Belongs to the RNA methyltransferase RlmH family. Homodimer.

The protein resides in the cytoplasm. The catalysed reaction is pseudouridine(1915) in 23S rRNA + S-adenosyl-L-methionine = N(3)-methylpseudouridine(1915) in 23S rRNA + S-adenosyl-L-homocysteine + H(+). Its function is as follows. Specifically methylates the pseudouridine at position 1915 (m3Psi1915) in 23S rRNA. This chain is Ribosomal RNA large subunit methyltransferase H, found in Rhodospirillum centenum (strain ATCC 51521 / SW).